The following is a 232-amino-acid chain: Phosphatidylserine decarboxylase proenzyme (232 aa).

Ser-201 functions as the Schiff-base intermediate with substrate; via pyruvic acid in the catalytic mechanism. At Ser-201 the chain carries Pyruvic acid (Ser); by autocatalysis.

It belongs to the phosphatidylserine decarboxylase family. PSD-A subfamily. Heterodimer of a large membrane-associated beta subunit and a small pyruvoyl-containing alpha subunit. It depends on pyruvate as a cofactor. Post-translationally, is synthesized initially as an inactive proenzyme. Formation of the active enzyme involves a self-maturation process in which the active site pyruvoyl group is generated from an internal serine residue via an autocatalytic post-translational modification. Two non-identical subunits are generated from the proenzyme in this reaction, and the pyruvate is formed at the N-terminus of the alpha chain, which is derived from the carboxyl end of the proenzyme. The post-translation cleavage follows an unusual pathway, termed non-hydrolytic serinolysis, in which the side chain hydroxyl group of the serine supplies its oxygen atom to form the C-terminus of the beta chain, while the remainder of the serine residue undergoes an oxidative deamination to produce ammonia and the pyruvoyl prosthetic group on the alpha chain.

The protein resides in the cell membrane. It carries out the reaction a 1,2-diacyl-sn-glycero-3-phospho-L-serine + H(+) = a 1,2-diacyl-sn-glycero-3-phosphoethanolamine + CO2. It functions in the pathway phospholipid metabolism; phosphatidylethanolamine biosynthesis; phosphatidylethanolamine from CDP-diacylglycerol: step 2/2. Its function is as follows. Catalyzes the formation of phosphatidylethanolamine (PtdEtn) from phosphatidylserine (PtdSer). The polypeptide is Phosphatidylserine decarboxylase proenzyme (Mycolicibacterium smegmatis (strain ATCC 700084 / mc(2)155) (Mycobacterium smegmatis)).